The primary structure comprises 307 residues: uncharacterized protein (307 aa).

Composition is skewed to basic and acidic residues over residues 42 to 52 (TCRSPGEDKCP) and 112 to 121 (QKKEEPEGSH). The interval 42–153 (TCRSPGEDKC…VPPAVASASA (112 aa)) is disordered. The span at 129–139 (KQHKKAKKRKS) shows a compositional bias: basic residues.

This is an uncharacterized protein from Mus musculus (Mouse).